The chain runs to 68 residues: KCNQ1 downstream neighbor protein (68 aa).

Positions 28 to 68 are disordered; the sequence is GVASGCSPSKASQEARGKEKCPTLNGQPQWSALFTLPPQRE.

In terms of tissue distribution, shows reduced expression in Wilms' tumor samples.

This is KCNQ1 downstream neighbor protein (KCNQ1DN) from Homo sapiens (Human).